Consider the following 269-residue polypeptide: MQAWVIGNWKQNPATSHDVDALLNELCTAISTTKQLSHNNSTRCQIMVAPSFLHLAAVSSRLKDTSVLCAAQDVSAYSASVGAYTGDCSAQQIADVGATWTILGHSERRQYHQESNDTLLQKMTHALTQELGVVFCIGETQAQYDAKQTLPVIDSQLAVVKKLIAEQPEVIDSLSTRLIIAYEPVWAIGTGKVPTVSEVSATHQYIKQTLAGFADSLSNMTVLYGGSVNADNADSFAADPMIHGALVGGASLKAESFLAIVTAFSKGSM.

8-10 contributes to the substrate binding site; sequence NWK. The active-site Electrophile is His-105. The active-site Proton acceptor is Glu-183. Substrate-binding positions include Gly-189, Ser-227, and 248 to 249; that span reads GG.

This sequence belongs to the triosephosphate isomerase family. In terms of assembly, homodimer.

Its subcellular location is the cytoplasm. The enzyme catalyses D-glyceraldehyde 3-phosphate = dihydroxyacetone phosphate. Its pathway is carbohydrate biosynthesis; gluconeogenesis. It participates in carbohydrate degradation; glycolysis; D-glyceraldehyde 3-phosphate from glycerone phosphate: step 1/1. Involved in the gluconeogenesis. Catalyzes stereospecifically the conversion of dihydroxyacetone phosphate (DHAP) to D-glyceraldehyde-3-phosphate (G3P). This chain is Triosephosphate isomerase, found in Psychrobacter arcticus (strain DSM 17307 / VKM B-2377 / 273-4).